We begin with the raw amino-acid sequence, 158 residues long: MVEINNQRKAFLDMLAWSEGTDNGRQKTRNHGYDVIVGGELFTDYSDHPRKLVTLNPKLKSTGAGRYQLLSRWWDAYRKQLGLKDFSPKSQDAVALQQIKERGALPMIDRGDIRQAIDRCSNIWASLPGAGYGQFEHKADSLIAKFKEAGGTVREIDV.

Glu-19 is a catalytic residue.

The protein belongs to the glycosyl hydrolase 24 family. As to quaternary structure, monomer.

The protein resides in the host cytoplasm. It catalyses the reaction Endolytic cleavage of the (1-&gt;4)-beta-glycosidic linkage between N-acetylmuramic acid (MurNAc) and N-acetylglucosamine (GlcNAc) residues in peptidoglycan with concomitant formation of a 1,6-anhydrobond in the MurNAc residue.. With respect to regulation, inactivated by zinc. Functionally, endolysin with transglycosylase activity that degrades host peptidoglycans and participates with the holin and spanin proteins in the sequential events which lead to the programmed host cell lysis releasing the mature viral particles. Once the holin has permeabilized the host cell membrane, the endolysin can reach the periplasm and break down the peptidoglycan layer. This Escherichia coli (Bacteriophage lambda) protein is Endolysin (R).